We begin with the raw amino-acid sequence, 544 residues long: Chaperonin GroEL 1 (544 aa).

Residues 29–32, 86–90, Gly413, 479–481, and Asp495 contribute to the ATP site; these read TLGP, DGTTT, and NAA.

Belongs to the chaperonin (HSP60) family. Forms a cylinder of 14 subunits composed of two heptameric rings stacked back-to-back. Interacts with the co-chaperonin GroES.

It localises to the cytoplasm. It carries out the reaction ATP + H2O + a folded polypeptide = ADP + phosphate + an unfolded polypeptide.. Functionally, together with its co-chaperonin GroES, plays an essential role in assisting protein folding. The GroEL-GroES system forms a nano-cage that allows encapsulation of the non-native substrate proteins and provides a physical environment optimized to promote and accelerate protein folding. This chain is Chaperonin GroEL 1, found in Parasynechococcus marenigrum (strain WH8102).